The chain runs to 444 residues: ATP-dependent protease ATPase subunit HslU (444 aa).

ATP-binding positions include Ile-18 and 60–65; that span reads GVGKTE. The interval 141-161 is disordered; that stretch reads DAWGNNEEGDNDSGTRQSFRK. Residues Asp-257, Glu-322, and Arg-394 each contribute to the ATP site.

The protein belongs to the ClpX chaperone family. HslU subfamily. A double ring-shaped homohexamer of HslV is capped on each side by a ring-shaped HslU homohexamer. The assembly of the HslU/HslV complex is dependent on binding of ATP.

Its subcellular location is the cytoplasm. Its function is as follows. ATPase subunit of a proteasome-like degradation complex; this subunit has chaperone activity. The binding of ATP and its subsequent hydrolysis by HslU are essential for unfolding of protein substrates subsequently hydrolyzed by HslV. HslU recognizes the N-terminal part of its protein substrates and unfolds these before they are guided to HslV for hydrolysis. The polypeptide is ATP-dependent protease ATPase subunit HslU (Aliivibrio fischeri (strain MJ11) (Vibrio fischeri)).